Reading from the N-terminus, the 993-residue chain is Glycogen phosphorylase 2 (993 aa).

The segment at 1-82 (MEEKRSTNSP…SNQSEDPATQ (82 aa)) is disordered. Residues 19-48 (RSGSITSATSHPPRSNSNPKLVAKHQQQLY) show a composition bias toward polar residues. The segment covering 58 to 77 (EQQNQQPQQQQQKQTSNQSE) has biased composition (low complexity). K763 is subject to N6-(pyridoxal phosphate)lysine. A compositionally biased stretch (polar residues) spans 962–981 (VISGGDKTNNTLKPKQTTKG). The tract at residues 962–993 (VISGGDKTNNTLKPKQTTKGFNIGGQPGNPTN) is disordered. A compositionally biased stretch (gly residues) spans 983–993 (NIGGQPGNPTN).

This sequence belongs to the glycogen phosphorylase family. As to quaternary structure, homodimer. The cofactor is pyridoxal 5'-phosphate. The N-terminus is blocked. In terms of processing, enzyme activity requires processing of the 113 kDa peptide to an enzymatically active 106 kDa form of the protein. Processing would occur near the middle of the Gln-rich repetitive element.

The enzyme catalyses [(1-&gt;4)-alpha-D-glucosyl](n) + phosphate = [(1-&gt;4)-alpha-D-glucosyl](n-1) + alpha-D-glucose 1-phosphate. Functionally, phosphorylase is an important allosteric enzyme in carbohydrate metabolism. Enzymes from different sources differ in their regulatory mechanisms and in their natural substrates. However, all known phosphorylases share catalytic and structural properties. In Dictyostelium discoideum (Social amoeba), this protein is Glycogen phosphorylase 2 (glpD).